The chain runs to 490 residues: Cytochrome P450 2C38 (490 aa).

Residues 1-20 (MDLVTFLVLTLSSLILLSLW) form the signal peptide. Cys435 is a heme binding site.

The protein belongs to the cytochrome P450 family. It depends on heme as a cofactor. Liver, brain, kidney, and intestine, with trace amounts in lung and heart.

It localises to the endoplasmic reticulum membrane. It is found in the microsome membrane. The enzyme catalyses an organic molecule + reduced [NADPH--hemoprotein reductase] + O2 = an alcohol + oxidized [NADPH--hemoprotein reductase] + H2O + H(+). It carries out the reaction (5Z,8Z,11Z,14Z)-eicosatetraenoate + reduced [NADPH--hemoprotein reductase] + O2 = 11,12-epoxy-(5Z,8Z,14Z)-eicosatrienoate + oxidized [NADPH--hemoprotein reductase] + H2O + H(+). Its pathway is lipid metabolism; arachidonate metabolism. A cytochrome P450 monooxygenase that primarily catalyzes the epoxidation of 11,12 double bond of (5Z,8Z,11Z,14Z)-eicosatetraenoic acid (arachidonate) forming 11,12-epoxyeicosatrienoic acid (11,12-EET) regioisomer. Mechanistically, uses molecular oxygen inserting one oxygen atom into a substrate, and reducing the second into a water molecule, with two electrons provided by NADPH via cytochrome P450 reductase (CPR; NADPH--hemoprotein reductase). The chain is Cytochrome P450 2C38 from Mus musculus (Mouse).